A 439-amino-acid polypeptide reads, in one-letter code: MAVTKLFARYVYDSRGNPTVEVDLTTDKGLFRSIVPSGASTGIHEALELRDGDKSKWLGKGVTKAVANVNELIAPAFVKANLDVTNQSAVDDFLNKLDGTPNKSKLGANAILGVSLATAKAAAAEKNVPLYQHLADISGSKQDKFVLPVPFQNVLNGGSHAGGALAFQEFMIVPTDAPTFSEALRMGSEVYHNLKSLTKKKYGQSAGNVGDEGGVAPDIGSPREALDLIMDAIDKAGYKGKIGIALDVAASEFYKDGKYDLDFKNPNSDESKWLSGEQLASLYEELINEYPIVSIEDPFGEDDWDAWVHFYSKVSSKVQIVGDDLTVTNPLRIKTAIEKKAANALLLKVNQIGSLTESIKAAQDSFDATWGVMVSHRSGETEDTFIADLSVGLRAGQIKTGAPARSERLAKLNQILRIEEELGDKAIYAGKNFHAASQL.

Residues H160 and E169 each contribute to the substrate site. Catalysis depends on E212, which acts as the Proton donor. Mg(2+) contacts are provided by D247, E296, and D323. Positions 296 and 323 each coordinate substrate. K348 (proton acceptor) is an active-site residue. Substrate-binding positions include 375–378 (SHRS) and K399.

Belongs to the enolase family. Homodimer. Mg(2+) serves as cofactor.

Its subcellular location is the cytoplasm. The enzyme catalyses (2R)-2-phosphoglycerate = phosphoenolpyruvate + H2O. It participates in carbohydrate degradation; glycolysis; pyruvate from D-glyceraldehyde 3-phosphate: step 4/5. In Debaryomyces hansenii (strain ATCC 36239 / CBS 767 / BCRC 21394 / JCM 1990 / NBRC 0083 / IGC 2968) (Yeast), this protein is Enolase 2 (ENO2).